The primary structure comprises 119 residues: Ribosome-binding factor A (119 aa).

The protein belongs to the RbfA family. In terms of assembly, monomer. Binds 30S ribosomal subunits, but not 50S ribosomal subunits or 70S ribosomes.

It localises to the cytoplasm. Functionally, one of several proteins that assist in the late maturation steps of the functional core of the 30S ribosomal subunit. Associates with free 30S ribosomal subunits (but not with 30S subunits that are part of 70S ribosomes or polysomes). Required for efficient processing of 16S rRNA. May interact with the 5'-terminal helix region of 16S rRNA. In Chlorobium luteolum (strain DSM 273 / BCRC 81028 / 2530) (Pelodictyon luteolum), this protein is Ribosome-binding factor A.